The following is a 471-amino-acid chain: Glutamate--tRNA ligase (471 aa).

The 'HIGH' region signature appears at 9 to 19 (PSPTGYLHVGG). Positions 98, 100, 125, and 127 each coordinate Zn(2+). Residues 237 to 241 (KLSKR) carry the 'KMSKS' region motif. Residue lysine 240 coordinates ATP.

The protein belongs to the class-I aminoacyl-tRNA synthetase family. Glutamate--tRNA ligase type 1 subfamily. Monomer. Requires Zn(2+) as cofactor.

Its subcellular location is the cytoplasm. The enzyme catalyses tRNA(Glu) + L-glutamate + ATP = L-glutamyl-tRNA(Glu) + AMP + diphosphate. Its function is as follows. Catalyzes the attachment of glutamate to tRNA(Glu) in a two-step reaction: glutamate is first activated by ATP to form Glu-AMP and then transferred to the acceptor end of tRNA(Glu). The protein is Glutamate--tRNA ligase of Salmonella enteritidis PT4 (strain P125109).